Reading from the N-terminus, the 1072-residue chain is Zinc finger MIZ domain-containing protein 1 (1072 aa).

The segment at 1–120 (MNSMDRHIQQ…HQKSRQNDPP (120 aa)) is sufficient for transactivation activity; sufficient for interaction with NOTCH1. Lys91 participates in a covalent cross-link: Glycyl lysine isopeptide (Lys-Gly) (interchain with G-Cter in SUMO2). 2 disordered regions span residues 112–141 (QKSRQNDPPGKLPMQPPLSSMSSMKPTLSH) and 362–538 (TPSG…PYLS). Residues 128-141 (PLSSMSSMKPTLSH) show a composition bias toward low complexity. Over residues 419–436 (YGNQQYGPNSQFPTQPGQ) the composition is skewed to polar residues. Over residues 437–446 (YPTPNPPRPL) the composition is skewed to pro residues. Over residues 489-501 (SSGSSYSSYSQGS) the composition is skewed to low complexity. A compositionally biased stretch (pro residues) spans 517-528 (SPVPGNPTPPMT). The segment at 734–815 (GEDGVEQTAI…MWGILNAIQH (82 aa)) adopts an SP-RING-type zinc-finger fold. Zn(2+)-binding residues include Cys765, His767, Cys788, and Cys791. Glycyl lysine isopeptide (Lys-Gly) (interchain with G-Cter in SUMO2) cross-links involve residues Lys841 and Lys850. The interval 844–1072 (PDGIPSKRFK…DDLLSLFENN (229 aa)) is transactivation domain. Residues 875-886 (GPSPYPLPPPPG) are compositionally biased toward pro residues. The tract at residues 875-1072 (GPSPYPLPPP…DDLLSLFENN (198 aa)) is disordered. Polar residues-rich tracts occupy residues 888–902 (TSSNDYSSQGNNYQG) and 958–968 (SSDQPHPSIQQ). A compositionally biased stretch (pro residues) spans 988-1001 (APPPSQPPRQPPQA). A compositionally biased stretch (low complexity) spans 1045-1072 (PDELLSYLDPPDLPSNSNDDLLSLFENN).

Interacts with AR, but not with ESR1, NR3C1, PGR, THRB nor VDR. Interacts with NOTCH1 and RBPJ. Interacts with SMARCA4. Interacts (via SP-RING-type domain) with SMAD3 and SMAD4 (via MH2 domain). As to expression, expressed in brain.

It is found in the nucleus. The protein localises to the nucleoplasm. It localises to the cytoplasm. Functionally, acts as a transcriptional coactivator. Increases ligand-dependent transcriptional activity of AR and promotes AR sumoylation. The stimulation of AR activity is dependent upon sumoylation. Also functions as a transcriptional coactivator in the TGF-beta signaling pathway by increasing the activity of the SMAD3/SMAD4 transcriptional complex. Involved in transcriptional activation of a subset of NOTCH1 target genes including MYC. Involved in thymocyte and T cell development. Involved in the regulation of postmitotic positioning of pyramidal neurons in the developing cerebral cortex. In Mus musculus (Mouse), this protein is Zinc finger MIZ domain-containing protein 1 (Zmiz1).